A 228-amino-acid polypeptide reads, in one-letter code: Ribosomal RNA small subunit methyltransferase G (228 aa).

Residues Gly-89, Leu-94, 140–141 (VE), and Arg-159 contribute to the S-adenosyl-L-methionine site.

This sequence belongs to the methyltransferase superfamily. RNA methyltransferase RsmG family.

Its subcellular location is the cytoplasm. It carries out the reaction guanosine(527) in 16S rRNA + S-adenosyl-L-methionine = N(7)-methylguanosine(527) in 16S rRNA + S-adenosyl-L-homocysteine. Functionally, specifically methylates the N7 position of guanine in position 527 of 16S rRNA. This chain is Ribosomal RNA small subunit methyltransferase G, found in Burkholderia ambifaria (strain MC40-6).